The chain runs to 463 residues: Phosphomethylpyrimidine synthase (463 aa).

Residues N80, M109, Y138, H173, 193–195 (SRG), 234–237 (DGLR), and E273 contribute to the substrate site. Zn(2+) is bound at residue H277. Y300 serves as a coordination point for substrate. H341 is a Zn(2+) binding site. [4Fe-4S] cluster contacts are provided by C421, C424, and C429.

The protein belongs to the ThiC family. As to quaternary structure, homodimer. [4Fe-4S] cluster is required as a cofactor.

It catalyses the reaction 5-amino-1-(5-phospho-beta-D-ribosyl)imidazole + S-adenosyl-L-methionine = 4-amino-2-methyl-5-(phosphooxymethyl)pyrimidine + CO + 5'-deoxyadenosine + formate + L-methionine + 3 H(+). The protein operates within cofactor biosynthesis; thiamine diphosphate biosynthesis. Catalyzes the synthesis of the hydroxymethylpyrimidine phosphate (HMP-P) moiety of thiamine from aminoimidazole ribotide (AIR) in a radical S-adenosyl-L-methionine (SAM)-dependent reaction. The chain is Phosphomethylpyrimidine synthase from Anaeromyxobacter sp. (strain K).